Consider the following 314-residue polypeptide: Malate dehydrogenase (314 aa).

NAD(+) contacts are provided by residues 11-16 and D35; that span reads GSGNIG. Substrate contacts are provided by R84 and R90. Residues N97 and 120 to 122 each bind NAD(+); that span reads ITN. 2 residues coordinate substrate: N122 and R153. The active-site Proton acceptor is H177.

Belongs to the LDH/MDH superfamily. MDH type 3 family.

It carries out the reaction (S)-malate + NAD(+) = oxaloacetate + NADH + H(+). In terms of biological role, catalyzes the reversible oxidation of malate to oxaloacetate. This chain is Malate dehydrogenase, found in Rickettsia canadensis (strain McKiel).